The following is a 1570-amino-acid chain: MSSLLERLHSKYSQNRPWPETIKLVRQIMEKRTGMMSGSHQHLVTCLETLQKALKVSSLSAMTDRLESIARQNGLTSHLSPNGTECYITTDMFYLEVLLDTEGQLCDVKVAHHRENPVSCPELVEQLREKNFEDFSQHLKGLVNLYKVPGDNKLETKMYLALQSLELDLTKMAAIYWQATNATVLEKILHGTVGYLTPRSGGQVMSLKYYVSPYDLFDDGTGASISLSEGHAVPRSLGMNVSVTIEATTSMYKLPIAPLIVGSHAMDNKGTPSFTSITNANSVDLPACFFLKFPQPIPVSRAFIQKIEHCTGIPLIDGSHTFLPHYELVTQFELAKEKDPGPLNHNMRFYASLPGQQHCYFLNKDAPLPDGRSLQGTLLSKIPFQHPSRVPVILSLIRHQVAYNTLIGSCVKRTMLKEDCPGLLQFEVAPLSDSCFSISFQHPVNDSLVCVVMDVQDSTHVSCKLYKGLSDALICTDDFITKVVQRCMSIPVTMRAIRRKAETIQADTPALSLIAETVEDMVKKNLPPASSPGYGMTSALSGLTTPTSSYTSGQNSSLFNMGMKERHDSTGHGDDFNKVTQNPILTSLLQITNNTGGTLGSSPTQPQHTPPPVSSPASNTKNHPMLMNLLKDNPAQDFSNLYGGSPMERQNSSGSPRTELGASATGKPKKKRPRTGAEKMKNQTEDDFQRELFSMDVDSQNTIFDVGMAGDALDTPHITPAPSQCGTPPTVYQQSIPHAQSNMQRMVRIPSTDAIIPDVTDILSDIAEEASKLSGPGEDCPNLGTPVRDSSSSGHSQSTLFDTDVFQVDGGGGSGGENPYPDPVDLIVDSHGSPNSDSPNTFFNSVDFNPDLLNSQSQSGFTDDLNDDSSQSGDNDFKDFAGPGLASLNIVSGLPVDGGDGKYKMGLGADTLDFSIISTGGSKTLGGPDIQETQSRSQSPLLSNDLGKDRPQKQKVKESSNGGGAGGGLSGMQSAGMEGKSMKRSRTPSSDGKSKDKPPKRKKTESDGKSPSHITNRPFTPPTSTGGSKSPGTSGRSQTPPGMATPPIPKITIQIPKGTVSVGKPSSHGQYSSSGSSSSSSSKSHHGHSSLSSSASGKIKSNKSDGSSGMKIGSSGGGMYSGQSGQSSSQSKNSSQSMGKAGSSPITKHGLSSNVSNSSGSKTKPQGKPSVLMNPSLSKPNISPSHSRPSGGSDKMSSPMKPMPGTPPSSKAKSPIGSGGQHLSGGGSNSTTKSSSGLVSSGSLSQKPNSSSSSSSSSSSSSSSSSSSSSSFCGGVSQNLHGNSKGKSPSRNKKPSLTAVIDKLKHGVGTGGPGSEDPMDGGGGGGSTGAPSHGMSSKHGMVVGEFPTKREKSEKDKSKGSGSGGSSDPSKKGGGDSKGSVGTGVAKIIISKHDGGSPSIKAKVTLQKPEGGGDGLRSQMQKNYGSPLISGSTPKHERCSPSHNKSPAYTPQALDSESESGSSSIAEKSYQNSPSSDDGGGSGSRAQTEYSAEKHKKHKKEKKRLKDKDRDREKKKSYGMKPESWSKSPISADPTMAMSGGSMMSSDRGVRPTPSFLMDDDDLMDVPLTL.

Short sequence motifs (LXXLL motif) lie at residues 585-589 (LTSLL) and 626-630 (LMNLL). Disordered stretches follow at residues 592–687 (TNNT…TEDD), 771–880 (SKLS…FKDF), and 922–1561 (SKTL…MDDD). Basic and acidic residues predominate over residues 675–687 (TGAEKMKNQTEDD). Composition is skewed to polar residues over residues 788-801 (RDSSSSGHSQSTLF), 832-861 (GSPNSDSPNTFFNSVDFNPDLLNSQSQSGF), and 931-942 (QETQSRSQSPLL). Positions 946 to 958 (LGKDRPQKQKVKE) are enriched in basic and acidic residues. Residues 961–970 (NGGGAGGGLS) show a composition bias toward gly residues. 5 stretches are compositionally biased toward low complexity: residues 1022–1035 (PTSTGGSKSPGTSG), 1066–1082 (SSHGQYSSSGSSSSSSS), 1089–1113 (SSLSSSASGKIKSNKSDGSSGMKIG), 1121–1140 (SGQSGQSSSQSKNSSQSMGK), and 1152–1161 (SSNVSNSSGS). Residues 1173–1190 (MNPSLSKPNISPSHSRPS) are compositionally biased toward polar residues. The span at 1217–1228 (GSGGQHLSGGGS) shows a compositional bias: gly residues. A compositionally biased stretch (low complexity) spans 1229 to 1271 (NSTTKSSSGLVSSGSLSQKPNSSSSSSSSSSSSSSSSSSSSSS). A compositionally biased stretch (polar residues) spans 1276-1287 (VSQNLHGNSKGK). The span at 1308–1328 (VGTGGPGSEDPMDGGGGGGST) shows a compositional bias: gly residues. Basic and acidic residues predominate over residues 1347-1359 (PTKREKSEKDKSK). 2 stretches are compositionally biased toward polar residues: residues 1418-1433 (SQMQKNYGSPLISGST) and 1441-1455 (PSHNKSPAYTPQALD). The span at 1459–1469 (ESGSSSIAEKS) shows a compositional bias: low complexity. Over residues 1494–1503 (KHKKHKKEKK) the composition is skewed to basic residues. The span at 1504–1516 (RLKDKDRDREKKK) shows a compositional bias: basic and acidic residues. Residues 1536–1546 (MAMSGGSMMSS) show a composition bias toward low complexity.

Belongs to the Mediator complex subunit 1 family. As to quaternary structure, component of the Mediator complex.

It is found in the nucleus. In terms of biological role, component of the Mediator complex, a coactivator involved in the regulated transcription of nearly all RNA polymerase II-dependent genes. Mediator functions as a bridge to convey information from gene-specific regulatory proteins to the basal RNA polymerase II transcription machinery. Mediator is recruited to promoters by direct interactions with regulatory proteins and serves as a scaffold for the assembly of a functional preinitiation complex with RNA polymerase II and the general transcription factors. The protein is Mediator of RNA polymerase II transcription subunit 1 (med1) of Xenopus laevis (African clawed frog).